The sequence spans 195 residues: Myelin basic protein (195 aa).

At Ala2 the chain carries N-acetylalanine. Ser8 and Ser13 each carry phosphoserine. Tyr15 is modified (phosphotyrosine). Position 18 is a phosphothreonine (Thr18). A Phosphoserine modification is found at Ser20. Thr21 is subject to Phosphothreonine. 2 positions are modified to citrulline: Arg26 and Arg32. Thr36 is modified (phosphothreonine). Ser41 is subject to Phosphoserine. Omega-N-methylarginine occurs at positions 44 and 50. Positions Phe45–Gly79 are disordered. Ser57 is modified (phosphoserine). Phosphothreonine is present on Thr92. The residue at position 94 (Tyr94) is a Phosphotyrosine. Ser101 is modified (phosphoserine). Residues Thr104, Thr119, and Thr122 each carry the phosphothreonine modification. Residues Ile117–Ser139 form a disordered region. A Deamidated glutamine modification is found at Gln127. Arg131 bears the Omega-N-methylarginine; alternate mark. At Arg131 the chain carries Symmetric dimethylarginine; alternate. Position 139 is a phosphoserine (Ser139). Position 146 is an N6-acetyllysine (Lys146). Arg154 carries the post-translational modification Citrulline. Gln172 carries the deamidated glutamine modification. Residue Arg184 is modified to Citrulline. Position 186 is a phosphoserine (Ser186). Ser190 carries the phosphoserine; by UHMK1 modification. Position 195 is a citrulline (Arg195).

It belongs to the myelin basic protein family. As to quaternary structure, homodimer. As in other animals, several charge isomers may be produced as a result of optional post-translational modifications, such as phosphorylation of serine or threonine residues, deamidation of glutamine or asparagine residues, citrullination and methylation of arginine residues. In terms of processing, arg-131 was found to be 44% monomethylated and 11% symmetrically dimethylated. Post-translationally, phosphorylated by TAOK2, VRK2, MAPK11, MAPK12, MAPK14 and MINK1. Proteolytically cleaved in B cell lysosomes by cathepsin CTSG which degrades the major immunogenic MBP epitope and prevents the activation of MBP-specific autoreactive T cells. Found in both the central and the peripheral nervous system.

The protein resides in the myelin membrane. Its function is as follows. Is, with PLP, the most abundant protein component of the myelin membrane in the CNS. Has a role in both the formation and stabilization of this compact multilayer arrangement of bilayers. Each splice variant and charge isomer may have a specialized function in the assembly of an optimized, biochemically functional myelin membrane. This Rattus norvegicus (Rat) protein is Myelin basic protein (Mbp).